A 213-amino-acid chain; its full sequence is 3-isopropylmalate dehydratase small subunit (213 aa).

It belongs to the LeuD family. LeuD type 1 subfamily. In terms of assembly, heterodimer of LeuC and LeuD.

It carries out the reaction (2R,3S)-3-isopropylmalate = (2S)-2-isopropylmalate. It participates in amino-acid biosynthesis; L-leucine biosynthesis; L-leucine from 3-methyl-2-oxobutanoate: step 2/4. Catalyzes the isomerization between 2-isopropylmalate and 3-isopropylmalate, via the formation of 2-isopropylmaleate. This chain is 3-isopropylmalate dehydratase small subunit, found in Neisseria meningitidis serogroup B (strain ATCC BAA-335 / MC58).